We begin with the raw amino-acid sequence, 401 residues long: 2,3,4,5-tetrahydropyridine-2,6-dicarboxylate N-succinyltransferase (401 aa).

Glu-269 acts as the Acyl-anhydride intermediate in catalysis. Succinyl-CoA-binding positions include Arg-271, Gly-286, Ser-289, Ala-312, Asp-327–Ala-328, Gly-335, and Lys-364.

Belongs to the type 2 tetrahydrodipicolinate N-succinyltransferase family. Homotrimer.

It is found in the cytoplasm. The catalysed reaction is (S)-2,3,4,5-tetrahydrodipicolinate + succinyl-CoA + H2O = (S)-2-succinylamino-6-oxoheptanedioate + CoA. It participates in amino-acid biosynthesis; L-lysine biosynthesis via DAP pathway; LL-2,6-diaminopimelate from (S)-tetrahydrodipicolinate (succinylase route): step 1/3. Functionally, catalyzes the conversion of the cyclic tetrahydrodipicolinate (THDP) into the acyclic N-succinyl-L-2-amino-6-oxopimelate using succinyl-CoA. The sequence is that of 2,3,4,5-tetrahydropyridine-2,6-dicarboxylate N-succinyltransferase from Helicobacter pylori (strain ATCC 700392 / 26695) (Campylobacter pylori).